The following is a 231-amino-acid chain: MKVVIVTSVASLLDASIQFQKTACRHHCNYLSMQVVKEIEEFGTINEKKLEFDTWKDVIQNDEIDAIVFYRVKQISISTGVLYESMMRNRTKPISMYFVRDCLAFDGNPPSFRMTSCNINAYNRNKIKDLIILMNMKTCNKKIIGEFIIDNFGSVDALLSIINSNVTWVTSVINNSNGRGINIRVSNNKMLTITSFRRFVNKLKMYKTTKCASQLDNLCTKMNKMGILDKK.

This sequence belongs to the orthopoxvirus OPG058 family.

Its subcellular location is the host nucleus. It localises to the host nucleolus. The sequence is that of Protein OPG061 (OPG061) from Cynomys gunnisoni (Gunnison's prairie dog).